The following is a 257-amino-acid chain: Thioesterase frbE (257 aa).

The protein belongs to the AMT4 thioesterase family.

It functions in the pathway antifungal biosynthesis. Its function is as follows. Thioesterase; part of the gene cluster that mediates the biosynthesis of the antifungal antibiotic FR901469, an inhibitor of beta-1,3-glucansynthase, exerting antifungal activity against the pathogenes Candida albicans and Aspergillus fumigatus. FR901469 is a cyclic depsipeptide containing 12 amino acid residues and a fatty acid chain. The NRPS frbI contains 12 modules responsible for the formation of the depsipeptide backbone which is denoted as Acyl-Thr-Ala-Tyr-Val-4OHPro-Thr-Thr-3OHPro-threo3OHGln-Gly-Thr-Orn-OH (C71H116N14O23). The PKS frbB is probably involved in the production of the hydrocarbon chain, and the acyl-CoA ligase frbC might be involved in the transport of the chain to the peptide ptoduct of frbI. Because FR901469 contains 3 hydroxylated amino acid residues, the 3 oxygenases frbA, frbH, and frbJ might be participating in amino acid hydroxylation. As no thioesterase domains were detected in frbI or frbB, the thioesterases frbD and frbE may instead release and cyclize the products of the NRPS and PKS, respectively. The chain is Thioesterase frbE from Dothideomycetidae sp. (strain 11243) (Fungal sp. (strain No.11243)).